A 208-amino-acid chain; its full sequence is GATA transcription factor 20 (208 aa).

A GATA-type zinc finger spans residues 94-119 (CASCDTTSTPLWRNGPKGPKSLCNAC).

It belongs to the type IV zinc-finger family. Class B subfamily.

The protein localises to the nucleus. Functionally, transcriptional regulator that specifically binds 5'-GATA-3' or 5'-GAT-3' motifs within gene promoters. The sequence is that of GATA transcription factor 20 from Arabidopsis thaliana (Mouse-ear cress).